The chain runs to 136 residues: uncharacterized protein (136 aa).

Belongs to the mimivirus L163/R849 family.

This is an uncharacterized protein from Acanthamoeba polyphaga mimivirus (APMV).